A 69-amino-acid polypeptide reads, in one-letter code: Large ribosomal subunit protein uL30 (69 aa).

It belongs to the universal ribosomal protein uL30 family. Part of the 50S ribosomal subunit.

In Rhizobium etli (strain ATCC 51251 / DSM 11541 / JCM 21823 / NBRC 15573 / CFN 42), this protein is Large ribosomal subunit protein uL30.